The sequence spans 185 residues: Probable chorismate pyruvate-lyase 2 (185 aa).

Arg-80, Leu-118, and Glu-170 together coordinate substrate.

The protein belongs to the UbiC family.

The protein resides in the cytoplasm. It carries out the reaction chorismate = 4-hydroxybenzoate + pyruvate. It participates in cofactor biosynthesis; ubiquinone biosynthesis. Removes the pyruvyl group from chorismate, with concomitant aromatization of the ring, to provide 4-hydroxybenzoate (4HB) for the ubiquinone pathway. This Pseudomonas entomophila (strain L48) protein is Probable chorismate pyruvate-lyase 2.